A 212-amino-acid polypeptide reads, in one-letter code: uncharacterized protein (212 aa).

Residues 1 to 20 (MRRVLLCFLTLILLLPAASA) form the signal peptide.

This is an uncharacterized protein from Archaeoglobus fulgidus (strain ATCC 49558 / DSM 4304 / JCM 9628 / NBRC 100126 / VC-16).